The chain runs to 133 residues: ATP synthase epsilon chain, chloroplastic (133 aa).

This sequence belongs to the ATPase epsilon chain family. As to quaternary structure, F-type ATPases have 2 components, CF(1) - the catalytic core - and CF(0) - the membrane proton channel. CF(1) has five subunits: alpha(3), beta(3), gamma(1), delta(1), epsilon(1). CF(0) has three main subunits: a, b and c.

It localises to the plastid. Its subcellular location is the chloroplast thylakoid membrane. Its function is as follows. Produces ATP from ADP in the presence of a proton gradient across the membrane. The sequence is that of ATP synthase epsilon chain, chloroplastic from Jasminum nudiflorum (Winter jasmine).